The chain runs to 205 residues: Methylthioribulose-1-phosphate dehydratase (205 aa).

Zn(2+) contacts are provided by His94 and His96.

It belongs to the aldolase class II family. MtnB subfamily. The cofactor is Zn(2+).

The enzyme catalyses 5-(methylsulfanyl)-D-ribulose 1-phosphate = 5-methylsulfanyl-2,3-dioxopentyl phosphate + H2O. Its pathway is amino-acid biosynthesis; L-methionine biosynthesis via salvage pathway; L-methionine from S-methyl-5-thio-alpha-D-ribose 1-phosphate: step 2/6. Its function is as follows. Catalyzes the dehydration of methylthioribulose-1-phosphate (MTRu-1-P) into 2,3-diketo-5-methylthiopentyl-1-phosphate (DK-MTP-1-P). The sequence is that of Methylthioribulose-1-phosphate dehydratase from Pectobacterium atrosepticum (strain SCRI 1043 / ATCC BAA-672) (Erwinia carotovora subsp. atroseptica).